A 185-amino-acid chain; its full sequence is Der GTPase-activating protein YihI (185 aa).

Disordered stretches follow at residues 1–74 (MGRS…KKKI) and 145–169 (EPED…SSDE). Positions 23 to 33 (NRSESDVEGRE) are enriched in basic and acidic residues. Over residues 34 to 47 (RKRVKKRKGLKSGS) the composition is skewed to basic residues. Residues 48-68 (RHSDGSEAKQRKAALARDPRL) show a composition bias toward basic and acidic residues. A compositionally biased stretch (acidic residues) spans 145–155 (EPEDDEEEIFE).

The protein belongs to the YihI family. In terms of assembly, interacts with Der.

A GTPase-activating protein (GAP) that modifies Der/EngA GTPase function. May play a role in ribosome biogenesis. The sequence is that of Der GTPase-activating protein YihI from Vibrio atlanticus (strain LGP32) (Vibrio splendidus (strain Mel32)).